The chain runs to 209 residues: Mitochondrial import inner membrane translocase subunit Tim23 (209 aa).

Transmembrane regions (helical) follow at residues 73–93, 125–145, and 181–197; these read FELAFFTIGGCCMTGAAFGAM, ALWANTLGSLALLYSAFGVII, and GLTGLTLTSLYALYNNW.

Belongs to the Tim17/Tim22/Tim23 family. Component of the TIM23 complex at least composed of TIMM23, TIMM17 (TIMM17A or TIMM17B) and TIMM50; within this complex, directly interacts with TIMM50. The complex interacts with the TIMM44 component of the PAM complex and with DNAJC15. Upon mitochondrial depolarization, interacts with PINK1; the interaction is required for PINK1 accumulation at the outer mitochondrial membrane, kinase activation by autophosphorylation and PRKN recruitement to mitochondria.

The protein localises to the mitochondrion inner membrane. Functionally, essential component of the TIM23 complex, a complex that mediates the translocation of transit peptide-containing proteins across the mitochondrial inner membrane. Has a role in the activation of stress-induced mitophagy by protecting PINK1 from OMA1-mediated degradation and facilitating its accumulation at the outer mitochondrial membrane in response to depolarization. The chain is Mitochondrial import inner membrane translocase subunit Tim23 (TIMM23) from Homo sapiens (Human).